A 76-amino-acid polypeptide reads, in one-letter code: MRTLALHTAMLLLVALHAQAEARQARADEAAAQQQPGADDQGMAHSFTWPENAALPLSESERGLRCICVLGICRLL.

The N-terminal stretch at 1-22 (MRTLALHTAMLLLVALHAQAEA) is a signal peptide. A propeptide spanning residues 23–64 (RQARADEAAAQQQPGADDQGMAHSFTWPENAALPLSESERGL) is cleaved from the precursor. The segment at 25 to 45 (ARADEAAAQQQPGADDQGMAH) is disordered. Residues 30–44 (AAAQQQPGADDQGMA) show a composition bias toward low complexity. A disulfide bridge connects residues Cys-68 and Cys-73. Positions 74–76 (RLL) are excised as a propeptide.

This sequence belongs to the alpha-defensin family. Theta subfamily. In terms of assembly, forms a cyclic homodimer; disulfide-linked. This is a cyclic peptide.

In terms of biological role, has antimicrobial activities against bacteria and fungi. This Macaca mulatta (Rhesus macaque) protein is Demidefensin-3.